We begin with the raw amino-acid sequence, 89 residues long: Small ribosomal subunit protein uS14A (89 aa).

The protein belongs to the universal ribosomal protein uS14 family. In terms of assembly, part of the 30S ribosomal subunit. Contacts proteins S3 and S10.

Functionally, binds 16S rRNA, required for the assembly of 30S particles and may also be responsible for determining the conformation of the 16S rRNA at the A site. The protein is Small ribosomal subunit protein uS14A of Streptococcus agalactiae serotype Ia (strain ATCC 27591 / A909 / CDC SS700).